Consider the following 608-residue polypeptide: Dolichyl-diphosphooligosaccharide--protein glycosyltransferase subunit 1 (608 aa).

An N-terminal signal peptide occupies residues methionine 1–alanine 25. At serine 26–proline 440 the chain is on the lumenal side. Residue lysine 188 is modified to N6-acetyllysine. An N-linked (GlcNAc...) asparagine glycan is attached at asparagine 300. The chain crosses the membrane as a helical span at residues leucine 441 to valine 458. Residues arginine 459–leucine 608 lie on the Cytoplasmic side of the membrane. Lysine 539 carries the post-translational modification N6-acetyllysine; alternate. Residue lysine 539 forms a Glycyl lysine isopeptide (Lys-Gly) (interchain with G-Cter in SUMO2); alternate linkage.

Belongs to the OST1 family. Component of the oligosaccharyltransferase (OST) complex. OST exists in two different complex forms which contain common core subunits RPN1, RPN2, OST48, OST4, DAD1 and TMEM258, either STT3A or STT3B as catalytic subunits, and form-specific accessory subunits. STT3A complex assembly occurs through the formation of 3 subcomplexes. Subcomplex 1 contains RPN1 and TMEM258, subcomplex 2 contains the STT3A-specific subunits STT3A, DC2/OSTC, and KCP2 as well as the core subunit OST4, and subcomplex 3 contains RPN2, DAD1, and OST48. The STT3A complex can form stable complexes with the Sec61 complex or with both the Sec61 and TRAP complexes. Interacts with TMEM35A/NACHO. Ubiquitinated by the ECS(ASB11) complex. Ubiquitinated by RNF128, leading to degradation in a proteasome/lysosome-dependent manner. In terms of processing, ufmylated by UFL1 in response to endoplasmic reticulum stress, promoting reticulophagy of endoplasmic reticulum sheets.

The protein resides in the endoplasmic reticulum membrane. It functions in the pathway protein modification; protein glycosylation. In terms of biological role, subunit of the oligosaccharyl transferase (OST) complex that catalyzes the initial transfer of a defined glycan (Glc(3)Man(9)GlcNAc(2) in eukaryotes) from the lipid carrier dolichol-pyrophosphate to an asparagine residue within an Asn-X-Ser/Thr consensus motif in nascent polypeptide chains, the first step in protein N-glycosylation. N-glycosylation occurs cotranslationally and the complex associates with the Sec61 complex at the channel-forming translocon complex that mediates protein translocation across the endoplasmic reticulum (ER). All subunits are required for a maximal enzyme activity. This is Dolichyl-diphosphooligosaccharide--protein glycosyltransferase subunit 1 from Mus musculus (Mouse).